The sequence spans 1057 residues: Carbamoyl phosphate synthase large chain (1057 aa).

The tract at residues 1–401 (MPKRNDIKTI…SLLKAIRSLE (401 aa)) is carboxyphosphate synthetic domain. ATP contacts are provided by arginine 129, arginine 169, glycine 175, glycine 176, lysine 208, isoleucine 210, glutamate 215, glycine 241, isoleucine 242, histidine 243, glutamine 284, and glutamate 298. The region spanning 133–327 (RTLMNDLNVP…IAKLAAKIAV (195 aa)) is the ATP-grasp 1 domain. The Mg(2+) site is built by glutamine 284, glutamate 298, and asparagine 300. 3 residues coordinate Mn(2+): glutamine 284, glutamate 298, and asparagine 300. An oligomerization domain region spans residues 402 to 546 (YGVHHLGLPN…YGTYETENES (145 aa)). Residues 547 to 929 (IVTDKEKILV…ALFKGLTGSG (383 aa)) are carbamoyl phosphate synthetic domain. In terms of domain architecture, ATP-grasp 2 spans 671 to 861 (EALLRKINVP…MAQLAMRAII (191 aa)). ATP is bound by residues arginine 707, arginine 746, leucine 748, glutamate 752, glycine 777, valine 778, histidine 779, serine 780, glutamine 820, and glutamate 832. Residues glutamine 820, glutamate 832, and asparagine 834 each contribute to the Mg(2+) site. Positions 820, 832, and 834 each coordinate Mn(2+). In terms of domain architecture, MGS-like spans 930 to 1057 (VEVKDHGTVL…ESMTFTMRQM (128 aa)). Positions 930-1057 (VEVKDHGTVL…ESMTFTMRQM (128 aa)) are allosteric domain.

Belongs to the CarB family. In terms of assembly, composed of two chains; the small (or glutamine) chain promotes the hydrolysis of glutamine to ammonia, which is used by the large (or ammonia) chain to synthesize carbamoyl phosphate. Tetramer of heterodimers (alpha,beta)4. It depends on Mg(2+) as a cofactor. Mn(2+) is required as a cofactor.

It catalyses the reaction hydrogencarbonate + L-glutamine + 2 ATP + H2O = carbamoyl phosphate + L-glutamate + 2 ADP + phosphate + 2 H(+). The enzyme catalyses hydrogencarbonate + NH4(+) + 2 ATP = carbamoyl phosphate + 2 ADP + phosphate + 2 H(+). Its pathway is amino-acid biosynthesis; L-arginine biosynthesis; carbamoyl phosphate from bicarbonate: step 1/1. It participates in pyrimidine metabolism; UMP biosynthesis via de novo pathway; (S)-dihydroorotate from bicarbonate: step 1/3. Its function is as follows. Large subunit of the glutamine-dependent carbamoyl phosphate synthetase (CPSase). CPSase catalyzes the formation of carbamoyl phosphate from the ammonia moiety of glutamine, carbonate, and phosphate donated by ATP, constituting the first step of 2 biosynthetic pathways, one leading to arginine and/or urea and the other to pyrimidine nucleotides. The large subunit (synthetase) binds the substrates ammonia (free or transferred from glutamine from the small subunit), hydrogencarbonate and ATP and carries out an ATP-coupled ligase reaction, activating hydrogencarbonate by forming carboxy phosphate which reacts with ammonia to form carbamoyl phosphate. The polypeptide is Carbamoyl phosphate synthase large chain (Staphylococcus aureus (strain MRSA252)).